The chain runs to 440 residues: MREEQVSDCGSITLEEWNGSSSTKLFKTATITASSSLSIQRSANRFNHVWRRVLQAFVPEGFPGSVTPDYVGFQLWDTLQGLSTYTKMMLSTQALLSAIGVGEKSATVIGATFQWFLRDFTGMLGGILFTFYQGSNLDSNAKMWRLVADLMNDIGMLMDLLSPLFPSAFIVVVCLGSLSRSFTGVASGATRAALTQHFALQDNAADISAKEGSQETMATMMGMSLGMLLARFTSGNPMAIWLSFLSLTVFHMYANYRAVRCLVLNSLNFERSSILLTHFIQTGQVLSPEQVSSMEGVLPLWATSLRSTNSKPLHKRVQLGVRVSSLPRLDMLQLLNGVGASSYKNAKYLLAHIKGNVSVILHKDSKPADVLKSYIHAIVLANLMEKSTSFYSEGEAWIDKHYDELLHKLRSGGWKTERLLSPSITWRANWISHTSAAKFD.

A run of 3 helical transmembrane segments spans residues 109 to 129, 154 to 174, and 232 to 252; these read IGAT…GILF, IGML…VVVC, and FTSG…VFHM.

It belongs to the RUS1 family.

Its subcellular location is the membrane. This chain is Protein root UVB sensitive 3, found in Arabidopsis thaliana (Mouse-ear cress).